Consider the following 417-residue polypeptide: Gamma-glutamyl phosphate reductase (417 aa).

This sequence belongs to the gamma-glutamyl phosphate reductase family.

It localises to the cytoplasm. It carries out the reaction L-glutamate 5-semialdehyde + phosphate + NADP(+) = L-glutamyl 5-phosphate + NADPH + H(+). The protein operates within amino-acid biosynthesis; L-proline biosynthesis; L-glutamate 5-semialdehyde from L-glutamate: step 2/2. Its function is as follows. Catalyzes the NADPH-dependent reduction of L-glutamate 5-phosphate into L-glutamate 5-semialdehyde and phosphate. The product spontaneously undergoes cyclization to form 1-pyrroline-5-carboxylate. The protein is Gamma-glutamyl phosphate reductase of Polynucleobacter asymbioticus (strain DSM 18221 / CIP 109841 / QLW-P1DMWA-1) (Polynucleobacter necessarius subsp. asymbioticus).